A 201-amino-acid polypeptide reads, in one-letter code: Large ribosomal subunit protein uL4 (201 aa).

The segment at 44–71 is disordered; it reads RAQKTRAEVSGSGKKPWRQKGTGRARSG.

This sequence belongs to the universal ribosomal protein uL4 family. Part of the 50S ribosomal subunit.

Its function is as follows. One of the primary rRNA binding proteins, this protein initially binds near the 5'-end of the 23S rRNA. It is important during the early stages of 50S assembly. It makes multiple contacts with different domains of the 23S rRNA in the assembled 50S subunit and ribosome. Forms part of the polypeptide exit tunnel. The chain is Large ribosomal subunit protein uL4 from Proteus mirabilis (strain HI4320).